An 87-amino-acid polypeptide reads, in one-letter code: U3-theraphotoxin-Cg1b (87 aa).

The first 23 residues, 1–23, serve as a signal peptide directing secretion; it reads MRTFTLIAILTCAVLVIFHVSAA. The propeptide occupies 24 to 48; it reads EELEAQDVIQPEDIFTGVATLEEDR. 3 cysteine pairs are disulfide-bonded: Cys52–Cys65, Cys56–Cys79, and Cys73–Cys84.

This sequence belongs to the neurotoxin 12 (Hwtx-2) family. 03 (juruin) subfamily. Expressed by the venom gland.

It is found in the secreted. In terms of biological role, probable ion channel inhibitor. In Chilobrachys guangxiensis (Chinese earth tiger tarantula), this protein is U3-theraphotoxin-Cg1b.